We begin with the raw amino-acid sequence, 1394 residues long: DNA-directed RNA polymerase subunit beta' (1394 aa).

Zn(2+)-binding residues include Cys-71, Cys-73, Cys-86, and Cys-89. Mg(2+) is bound by residues Asp-462, Asp-464, and Asp-466. Residues Cys-810, Cys-884, Cys-891, and Cys-894 each contribute to the Zn(2+) site.

Belongs to the RNA polymerase beta' chain family. In terms of assembly, the RNAP catalytic core consists of 2 alpha, 1 beta, 1 beta' and 1 omega subunit. When a sigma factor is associated with the core the holoenzyme is formed, which can initiate transcription. It depends on Mg(2+) as a cofactor. Requires Zn(2+) as cofactor.

It catalyses the reaction RNA(n) + a ribonucleoside 5'-triphosphate = RNA(n+1) + diphosphate. Functionally, DNA-dependent RNA polymerase catalyzes the transcription of DNA into RNA using the four ribonucleoside triphosphates as substrates. This Caulobacter sp. (strain K31) protein is DNA-directed RNA polymerase subunit beta'.